A 163-amino-acid chain; its full sequence is Protein-export protein SecB (163 aa).

Belongs to the SecB family. Homotetramer, a dimer of dimers. One homotetramer interacts with 1 SecA dimer.

The protein resides in the cytoplasm. Its function is as follows. One of the proteins required for the normal export of preproteins out of the cell cytoplasm. It is a molecular chaperone that binds to a subset of precursor proteins, maintaining them in a translocation-competent state. It also specifically binds to its receptor SecA. The protein is Protein-export protein SecB of Shewanella woodyi (strain ATCC 51908 / MS32).